The sequence spans 343 residues: tRNA N6-adenosine threonylcarbamoyltransferase (343 aa).

Fe cation-binding residues include His111 and His115. Substrate-binding positions include 133–137 (AVSGG), Asp166, Gly179, Asp183, and Asn273. Asp301 contacts Fe cation.

It belongs to the KAE1 / TsaD family. Fe(2+) is required as a cofactor.

The protein resides in the cytoplasm. It carries out the reaction L-threonylcarbamoyladenylate + adenosine(37) in tRNA = N(6)-L-threonylcarbamoyladenosine(37) in tRNA + AMP + H(+). Functionally, required for the formation of a threonylcarbamoyl group on adenosine at position 37 (t(6)A37) in tRNAs that read codons beginning with adenine. Is involved in the transfer of the threonylcarbamoyl moiety of threonylcarbamoyl-AMP (TC-AMP) to the N6 group of A37, together with TsaE and TsaB. TsaD likely plays a direct catalytic role in this reaction. In Geotalea uraniireducens (strain Rf4) (Geobacter uraniireducens), this protein is tRNA N6-adenosine threonylcarbamoyltransferase.